The following is a 179-amino-acid chain: ATP synthase subunit delta (179 aa).

It belongs to the ATPase delta chain family. In terms of assembly, F-type ATPases have 2 components, F(1) - the catalytic core - and F(0) - the membrane proton channel. F(1) has five subunits: alpha(3), beta(3), gamma(1), delta(1), epsilon(1). F(0) has three main subunits: a(1), b(2) and c(10-14). The alpha and beta chains form an alternating ring which encloses part of the gamma chain. F(1) is attached to F(0) by a central stalk formed by the gamma and epsilon chains, while a peripheral stalk is formed by the delta and b chains.

Its subcellular location is the cell inner membrane. F(1)F(0) ATP synthase produces ATP from ADP in the presence of a proton or sodium gradient. F-type ATPases consist of two structural domains, F(1) containing the extramembraneous catalytic core and F(0) containing the membrane proton channel, linked together by a central stalk and a peripheral stalk. During catalysis, ATP synthesis in the catalytic domain of F(1) is coupled via a rotary mechanism of the central stalk subunits to proton translocation. In terms of biological role, this protein is part of the stalk that links CF(0) to CF(1). It either transmits conformational changes from CF(0) to CF(1) or is implicated in proton conduction. This chain is ATP synthase subunit delta, found in Delftia acidovorans (strain DSM 14801 / SPH-1).